We begin with the raw amino-acid sequence, 285 residues long: ATP synthase gamma chain (285 aa).

The protein belongs to the ATPase gamma chain family. As to quaternary structure, F-type ATPases have 2 components, CF(1) - the catalytic core - and CF(0) - the membrane proton channel. CF(1) has five subunits: alpha(3), beta(3), gamma(1), delta(1), epsilon(1). CF(0) has three main subunits: a, b and c.

The protein resides in the cell membrane. Produces ATP from ADP in the presence of a proton gradient across the membrane. The gamma chain is believed to be important in regulating ATPase activity and the flow of protons through the CF(0) complex. This chain is ATP synthase gamma chain, found in Dehalococcoides mccartyi (strain CBDB1).